A 128-amino-acid chain; its full sequence is NADH-quinone oxidoreductase subunit A (128 aa).

The next 3 helical transmembrane spans lie at 12-32 (FAIFIISAIILCVLILTLSFL), 66-86 (FYLIAIFFVLFDIEAFYLYAW), and 96-116 (LGFYEAIIFVSVLLSGLVYLV).

Belongs to the complex I subunit 3 family. NDH-1 is composed of 14 different subunits. Subunits NuoA, H, J, K, L, M, N constitute the membrane sector of the complex.

Its subcellular location is the cell membrane. The enzyme catalyses a quinone + NADH + 5 H(+)(in) = a quinol + NAD(+) + 4 H(+)(out). NDH-1 shuttles electrons from NADH, via FMN and iron-sulfur (Fe-S) centers, to quinones in the respiratory chain. The immediate electron acceptor for the enzyme in this species is believed to be ubiquinone. Couples the redox reaction to proton translocation (for every two electrons transferred, four hydrogen ions are translocated across the cytoplasmic membrane), and thus conserves the redox energy in a proton gradient. This chain is NADH-quinone oxidoreductase subunit A, found in Baumannia cicadellinicola subsp. Homalodisca coagulata.